Consider the following 415-residue polypeptide: Thylakoid ADP,ATP carrier protein, chloroplastic (415 aa).

Residues 1 to 61 (MGEEKSLLQF…NFASLSVAIR (61 aa)) constitute a chloroplast transit peptide. The next 5 helical transmembrane spans lie at 106–126 (IALL…AFAG), 182–207 (LPQV…KLFR), 219–239 (LGAG…LDVL), 273–293 (GPSL…FDLV), and 309–329 (LLTA…LDTI). Solcar repeat units follow at residues 113–205 (PKDA…YKKL), 213–296 (LSVL…VKKS), and 307–387 (SSLL…VKKL). Arg187 contacts ADP. Arg330 is an ADP binding site. Residues 362 to 388 (GFVPNALKSMPNSSIKLTTFDIVKKLI) form a helical membrane-spanning segment.

This sequence belongs to the mitochondrial carrier (TC 2.A.29) family. As to expression, highly expressed in developing photosynthetic organs such as leaves, flower buds and green siliques. Also detected in roots, flowers, mature leaves and stems.

Its subcellular location is the plastid. It is found in the chloroplast thylakoid membrane. The protein resides in the chloroplast envelope. With respect to regulation, KM and Vmax values toward ATP only are increased by m-chlorocarbonyl cyanide phenylhydrazone (CCCP). The corresponding values for ADP are not affected. In terms of biological role, specifically transports adenine nucleotides. Involved in the uptake of ATP into thylakoids in exchange for lumenal ADP. The protein is Thylakoid ADP,ATP carrier protein, chloroplastic (TAAC) of Arabidopsis thaliana (Mouse-ear cress).